Reading from the N-terminus, the 668-residue chain is DNA ligase (668 aa).

NAD(+) contacts are provided by residues 37–41 (DAVYD), 86–87 (SM), and E116. K118 serves as the catalytic N6-AMP-lysine intermediate. Positions 139, 173, 288, and 312 each coordinate NAD(+). The Zn(2+) site is built by C406, C409, C424, and C429. One can recognise a BRCT domain in the interval 590–668 (APDNFFKEKT…EQEAIAKIEK (79 aa)).

Belongs to the NAD-dependent DNA ligase family. LigA subfamily. Mg(2+) serves as cofactor. It depends on Mn(2+) as a cofactor.

The enzyme catalyses NAD(+) + (deoxyribonucleotide)n-3'-hydroxyl + 5'-phospho-(deoxyribonucleotide)m = (deoxyribonucleotide)n+m + AMP + beta-nicotinamide D-nucleotide.. Functionally, DNA ligase that catalyzes the formation of phosphodiester linkages between 5'-phosphoryl and 3'-hydroxyl groups in double-stranded DNA using NAD as a coenzyme and as the energy source for the reaction. It is essential for DNA replication and repair of damaged DNA. The sequence is that of DNA ligase from Lactobacillus johnsonii (strain CNCM I-12250 / La1 / NCC 533).